The chain runs to 295 residues: Phosphoserine phosphatase, chloroplastic (295 aa).

A chloroplast-targeting transit peptide spans 1–54 (MEALTTSRVVPVQVPCRKLSSLFANFSCLELRRYPCRGLVSIMNHPKLLRPVTA). The Nucleophile role is filled by Asp-89. The Mg(2+) site is built by Asp-89 and Asp-91. Asp-91 functions as the Proton donor in the catalytic mechanism. Substrate contacts are provided by residues Glu-98, Arg-134, 178 to 179 (SG), and Lys-227. Asp-248 contributes to the Mg(2+) binding site.

Belongs to the HAD-like hydrolase superfamily. SerB family. The cofactor is Mg(2+). In terms of tissue distribution, ubiquitous. Mainly expressed in shoot and root meristems, vasculature, pollen, anthers, carpels and seeds.

Its subcellular location is the plastid. It is found in the chloroplast. The catalysed reaction is O-phospho-L-serine + H2O = L-serine + phosphate. It catalyses the reaction O-phospho-D-serine + H2O = D-serine + phosphate. It participates in amino-acid biosynthesis; L-serine biosynthesis; L-serine from 3-phospho-D-glycerate: step 3/3. With respect to regulation, approximately 60% inhibition of PSP activity is observed in presence of 10 mM serine. In terms of biological role, catalyzes the last step in the plastidial phosphorylated pathway of serine biosynthesis (PPSB). The reaction mechanism proceeds via the formation of a phosphoryl-enzyme intermediates. Required for embryo, pollen and root development. May be required preferentially for serine biosynthesis in non-photosynthetic tissues. The sequence is that of Phosphoserine phosphatase, chloroplastic (PSP) from Arabidopsis thaliana (Mouse-ear cress).